The sequence spans 340 residues: Fructose-1,6-bisphosphatase class 1 (340 aa).

Positions 107, 126, 128, and 129 each coordinate Mg(2+). Asparagine 215 is a binding site for substrate. Glutamate 287 provides a ligand contact to Mg(2+).

It belongs to the FBPase class 1 family. As to quaternary structure, homotetramer. Mg(2+) serves as cofactor.

It localises to the cytoplasm. It carries out the reaction beta-D-fructose 1,6-bisphosphate + H2O = beta-D-fructose 6-phosphate + phosphate. Its pathway is carbohydrate biosynthesis; gluconeogenesis. The polypeptide is Fructose-1,6-bisphosphatase class 1 (Brucella suis (strain ATCC 23445 / NCTC 10510)).